Here is a 397-residue protein sequence, read N- to C-terminus: DNA-directed RNA polymerase subunit Rpo1C (397 aa).

It belongs to the RNA polymerase beta' chain family. In terms of assembly, part of the RNA polymerase complex.

The protein resides in the cytoplasm. It catalyses the reaction RNA(n) + a ribonucleoside 5'-triphosphate = RNA(n+1) + diphosphate. DNA-dependent RNA polymerase (RNAP) catalyzes the transcription of DNA into RNA using the four ribonucleoside triphosphates as substrates. Forms part of the jaw domain. The polypeptide is DNA-directed RNA polymerase subunit Rpo1C (Pyrococcus horikoshii (strain ATCC 700860 / DSM 12428 / JCM 9974 / NBRC 100139 / OT-3)).